Here is a 234-residue protein sequence, read N- to C-terminus: Interleukin-34 (234 aa).

A signal peptide spans 1–20 (MPWGLAWLYCLGILLDVALG). An N-linked (GlcNAc...) asparagine glycan is attached at asparagine 99. Positions 215–234 (PRQPPTSLPRSPSSNHGPLP) are disordered. Positions 222 to 234 (LPRSPSSNHGPLP) are enriched in polar residues.

Belongs to the IL-34 family. Homodimer. Interacts with CSF1R.

The protein resides in the secreted. Its function is as follows. Cytokine that promotes the proliferation, survival and differentiation of monocytes and macrophages. Promotes the release of pro-inflammatory chemokines, and thereby plays an important role in innate immunity and in inflammatory processes. Plays an important role in the regulation of osteoclast proliferation and differentiation, and in the regulation of bone resorption. Signaling via CSF1R and its downstream effectors stimulates phosphorylation of MAPK1/ERK2 AND MAPK3/ERK1. The protein is Interleukin-34 (Il34) of Rattus norvegicus (Rat).